Here is a 98-residue protein sequence, read N- to C-terminus: NADH-ubiquinone oxidoreductase chain 4L (98 aa).

Transmembrane regions (helical) follow at residues Pro-2–Phe-22, Ser-29–Leu-49, and Ile-61–Val-81.

The protein belongs to the complex I subunit 4L family. In terms of assembly, core subunit of respiratory chain NADH dehydrogenase (Complex I) which is composed of 45 different subunits.

The protein resides in the mitochondrion inner membrane. The catalysed reaction is a ubiquinone + NADH + 5 H(+)(in) = a ubiquinol + NAD(+) + 4 H(+)(out). Its function is as follows. Core subunit of the mitochondrial membrane respiratory chain NADH dehydrogenase (Complex I) which catalyzes electron transfer from NADH through the respiratory chain, using ubiquinone as an electron acceptor. Part of the enzyme membrane arm which is embedded in the lipid bilayer and involved in proton translocation. This chain is NADH-ubiquinone oxidoreductase chain 4L (MT-ND4L), found in Microcebus mittermeieri (Mittermeier's mouse lemur).